We begin with the raw amino-acid sequence, 286 residues long: Putative type II secretion system L-type protein YghE (286 aa).

A helical membrane pass occupies residues 136–156; sequence VMILPILLILVALAVERGVTL.

Belongs to the GSP L family.

Its subcellular location is the cell inner membrane. Involved in a type II secretion system (T2SS, formerly general secretion pathway, GSP) for the export of folded proteins across the outer membrane. The polypeptide is Putative type II secretion system L-type protein YghE (Escherichia coli (strain K12)).